We begin with the raw amino-acid sequence, 145 residues long: RNAP inhibitory protein (145 aa).

Residues 110 to 123 (HIKKLNLNSLAMLS) form a C-terminal tail, binds in the RNAP DNA-binding channel region.

Belongs to the viral ORF131/RIP family. As to quaternary structure, interacts with host RNA polymerase (RNAP) subunits Rpo1N and Rpo2.

The protein localises to the virion. In terms of biological role, plays a role in the inhibition of global transcription by interacting with the RNA polymerase (RNAP) clamp, locking it in a fixed position and inhibiting the formation and/or stability of the pre-initiation complex (PIC). Also overlaps with the transcription factor B binding site; overall RIP probably interferes with DNA loading onto RNAP but does not displace DNA once it is loaded. May play a role in virus particle assembly, possibly by dissociating active RNAP from the virus genome. The chain is RNAP inhibitory protein from Acidianus two-tailed virus (ATV).